The following is a 169-amino-acid chain: MTTELQIGRVIKSHGIRGEVVVEVTTDDPDIRYAPGEVLHGRQTGREHTLTIDTARAHQGRLLIKFEEIPDRTAADSLRGTRFFAPPLEREDDEEGFYDHELEGLRIIHDGADIGVVTGVMHGPAGEILEVELTSGKEVLIPFVHAIVPEVDLEAGTATITPPDGLLDL.

One can recognise a PRC barrel domain in the interval 94-166; the sequence is EEGFYDHELE…TATITPPDGL (73 aa).

Belongs to the RimM family. In terms of assembly, binds ribosomal protein uS19.

The protein localises to the cytoplasm. Its function is as follows. An accessory protein needed during the final step in the assembly of 30S ribosomal subunit, possibly for assembly of the head region. Essential for efficient processing of 16S rRNA. May be needed both before and after RbfA during the maturation of 16S rRNA. It has affinity for free ribosomal 30S subunits but not for 70S ribosomes. The polypeptide is Ribosome maturation factor RimM (Corynebacterium efficiens (strain DSM 44549 / YS-314 / AJ 12310 / JCM 11189 / NBRC 100395)).